Reading from the N-terminus, the 788-residue chain is MAQRNGMSPRPPPLGRGRGAGGPSGVGSSPPSSCVPMGAPSTAGTGASAAATTTPGHGVHRVEPRGPPGAPPSSGNNSNFWHGPERLLLSQIPVERQALTELEYQAMGAVWRAAFLANSTGRAMRKWSQRDAGTLLPLGRPYGFYARVTPRSQMNGVGATDLRQLSPRDAWIVLVATVVHEVDPAADPTLGDKAGHPEGLCAQDGLYLALGAGFRVFVYDLANNTLILAARDADEWFRHGAGEVVRLYRCNRLGVGTPRATLLPQPALRQTLLRAEEATALGRELRRRWAGTTVALQTPGRRLQPMVLLGAWQELAQYEPFASAPHPASLLTAVRRHLNQRLCCGWLALGAVLPARWLGCAAGPATGTAAGTTSPPAASGTETEAAGGDAPCAIAGAVGSAVPVPPQPYGAAGGGAICVPNADAHAVVGADAAAAAAPTVMVGSTAMAGPAASGTVPRAMLVVLLDELGAVFGYCPLDGHVYPLAAELSHFLRAGVLGALALGRESAPAAEAARRLLPELDREQWERPRWDALHLHPRAALWAREPHGQLAFLLRPGRGEAEVLTLATKHPAICANVEDYLQDARRRADAQALGLDLATVVMEAGGQMIHKKTKKPKGKEDESLMKGKHSRYTRPTEPPLTPQASLGRALRRDDEDWKPSRLPGEDSWYDLDETFWVLGSNRKNDVYQRRWKKTVLRCGLEIDRPMPTVPKGCRPQTFTHEGIQLMGGATQEPLDTGLYAPSHVTSAFVPSVYMPPTVPYPDPAARLCRDMRRVTFSNIATHYHYNAQ.

Disordered stretches follow at residues 1–82 (MAQR…NFWH), 366–385 (TGTAAGTTSPPAASGTETEA), and 609–663 (IHKK…SRLP). A compositionally biased stretch (gly residues) spans 16–25 (RGRGAGGPSG). A compositionally biased stretch (low complexity) spans 26–56 (VGSSPPSSCVPMGAPSTAGTGASAAATTTPG). An RNA-binding region spans residues 74–248 (SGNNSNFWHG…HGAGEVVRLY (175 aa)). The segment covering 650–659 (LRRDDEDWKP) has biased composition (basic and acidic residues). An interaction with host EIF2AK2/PKR region spans residues 671–788 (LDETFWVLGS…IATHYHYNAQ (118 aa)).

This sequence belongs to the herpesviridae US22 family. Interacts with host EIF2AK2/PKR; this interaction retains EIF2AK2 to the host nucleus and prevents its activation. Interaction (via N-terminus) with host BECN1; this interaction inhibits host autophagy. Interacts with the viral DNA polymerase accessory subunit UL44. Interacts with host HSPA5.

Its subcellular location is the virion. The protein resides in the host cytoplasm. It is found in the host nucleus. Its function is as follows. Inhibits the establishment of the antiviral state and the integrated stress response (ISR) in the infected cell. Prevents the phosphorylation of the host eukaryotic translation initiation factor eIF-2alpha/EIF2S1 and thus the shutoff of viral and cellular protein synthesis by directly interacting with EIF2AK2/PKR. Prevents stress granule formation in response to eIF-2alpha/EIF2S1 phosphorylation, thereby rescuing viral replication and protein synthesis. Also inhibits host autophagy by interacting with host Beclin-1/BECN1. The protein is Protein HHLF1 (TRS1) of Homo sapiens (Human).